The primary structure comprises 276 residues: ATP synthase subunit a (276 aa).

6 consecutive transmembrane segments (helical) span residues 47–67 (WHIDSLLFSVGLGVLFLWLFY), 107–127 (IAPLGLTIFVWVFLMNLMDLI), 152–172 (DLNVTLGLALSVFVLIVFYSI), 188–208 (PFNHWALIPINFVLETVTLIA), 226–246 (LIFILIALMPWWAQFALSVPW), and 247–267 (AIFHILVIVLQAFIFMMLTIV).

It belongs to the ATPase A chain family. In terms of assembly, F-type ATPases have 2 components, CF(1) - the catalytic core - and CF(0) - the membrane proton channel. CF(1) has five subunits: alpha(3), beta(3), gamma(1), delta(1), epsilon(1). CF(0) has three main subunits: a(1), b(2) and c(9-12). The alpha and beta chains form an alternating ring which encloses part of the gamma chain. CF(1) is attached to CF(0) by a central stalk formed by the gamma and epsilon chains, while a peripheral stalk is formed by the delta and b chains.

Its subcellular location is the cell inner membrane. Functionally, key component of the proton channel; it plays a direct role in the translocation of protons across the membrane. The polypeptide is ATP synthase subunit a (Shewanella halifaxensis (strain HAW-EB4)).